The following is a 375-amino-acid chain: DNA replication and repair protein RecF (375 aa).

Position 30-37 (30-37 (GDNAQGKS)) interacts with ATP.

Belongs to the RecF family.

It is found in the cytoplasm. Its function is as follows. The RecF protein is involved in DNA metabolism; it is required for DNA replication and normal SOS inducibility. RecF binds preferentially to single-stranded, linear DNA. It also seems to bind ATP. In Gloeobacter violaceus (strain ATCC 29082 / PCC 7421), this protein is DNA replication and repair protein RecF.